A 449-amino-acid polypeptide reads, in one-letter code: MADPKDISPCKNEDLFLKCRSTLITGVLLPDKTRSDIWYDETGTIRTCGPDIARNHRNEADIILDGSGFLAMPGLINTHTHAAMTLLRGYADDMHLQQWLSEKIWPLEAHLTGEHVYWGTKLACLEMIRSGTIAFNDMYFYMKDAARAVQESGIRAVLSHGIITFGDEAKMEAELKATEDLVHHVRSLNTSLITSAIAPHAPYTVPPQHLEVCADYSQKEKIIIHTHLAETKQEVDDCQKSYGMTPAALLDKTGCLTERTVAAHGCWLSEDDCRLLAERRVSVAHNPVSNMKLATGRAMPYHWLKDQGVNVCLGTDGCSSNNNLDMLEEMKTAALCQKFFWNSDTLLPAAEALSMGTSWGAKALGYQGGVIQEGMPADIVLISLSHPSMVPLHNPVSNIAYSAEGSVVDTVICQGKILMYNRYIPDEEKIIAGARESADDLLNRAGIMA.

Zn(2+) contacts are provided by His-79 and His-81. Positions 108 and 200 each coordinate substrate. A Zn(2+)-binding site is contributed by His-227. The substrate site is built by Glu-230 and Asp-316. Zn(2+) is bound at residue Asp-316.

It belongs to the metallo-dependent hydrolases superfamily. MTA/SAH deaminase family. Homotetramer. It depends on Zn(2+) as a cofactor.

The enzyme catalyses 5'-deoxyadenosine + H2O + H(+) = 5'-deoxyinosine + NH4(+). The catalysed reaction is S-adenosyl-L-homocysteine + H2O + H(+) = S-inosyl-L-homocysteine + NH4(+). It catalyses the reaction S-methyl-5'-thioadenosine + H2O + H(+) = S-methyl-5'-thioinosine + NH4(+). It carries out the reaction adenosine + H2O + H(+) = inosine + NH4(+). The protein operates within amino-acid biosynthesis; S-adenosyl-L-methionine biosynthesis. Functionally, catalyzes the deamination of three SAM-derived enzymatic products, namely 5'-deoxyadenosine, S-adenosyl-L-homocysteine, and 5'-methylthioadenosine, to produce the inosine analogs. Can also deaminate adenosine. The preferred substrate for this enzyme is 5'-deoxyadenosine, but all these substrates are efficiently deaminated. Likely functions in a S-adenosyl-L-methionine (SAM) recycling pathway from S-adenosyl-L-homocysteine (SAH) produced from SAM-dependent methylation reactions. May also be involved in the recycling of 5'-deoxyadenosine, whereupon the 5'-deoxyribose moiety of 5'-deoxyinosine is further metabolized to deoxyhexoses used for the biosynthesis of aromatic amino acids in methanogens. The polypeptide is 5'-deoxyadenosine deaminase (Methanospirillum hungatei JF-1 (strain ATCC 27890 / DSM 864 / NBRC 100397 / JF-1)).